The sequence spans 423 residues: Kynureninase (423 aa).

Residues Leu105, Ser106, 133–136, Asp218, His221, and Tyr243 each bind pyridoxal 5'-phosphate; that span reads FPSD. Lys244 carries the N6-(pyridoxal phosphate)lysine modification. 2 residues coordinate pyridoxal 5'-phosphate: Trp273 and Asn301.

This sequence belongs to the kynureninase family. Homodimer. The cofactor is pyridoxal 5'-phosphate.

It catalyses the reaction L-kynurenine + H2O = anthranilate + L-alanine + H(+). The catalysed reaction is 3-hydroxy-L-kynurenine + H2O = 3-hydroxyanthranilate + L-alanine + H(+). It functions in the pathway amino-acid degradation; L-kynurenine degradation; L-alanine and anthranilate from L-kynurenine: step 1/1. Its pathway is cofactor biosynthesis; NAD(+) biosynthesis; quinolinate from L-kynurenine: step 2/3. In terms of biological role, catalyzes the cleavage of L-kynurenine (L-Kyn) and L-3-hydroxykynurenine (L-3OHKyn) into anthranilic acid (AA) and 3-hydroxyanthranilic acid (3-OHAA), respectively. This Xanthomonas axonopodis pv. citri (strain 306) protein is Kynureninase.